A 195-amino-acid chain; its full sequence is 3-isopropylmalate dehydratase small subunit (195 aa).

Belongs to the LeuD family. LeuD type 1 subfamily. In terms of assembly, heterodimer of LeuC and LeuD.

The enzyme catalyses (2R,3S)-3-isopropylmalate = (2S)-2-isopropylmalate. It functions in the pathway amino-acid biosynthesis; L-leucine biosynthesis; L-leucine from 3-methyl-2-oxobutanoate: step 2/4. Catalyzes the isomerization between 2-isopropylmalate and 3-isopropylmalate, via the formation of 2-isopropylmaleate. The sequence is that of 3-isopropylmalate dehydratase small subunit from Frankia casuarinae (strain DSM 45818 / CECT 9043 / HFP020203 / CcI3).